The primary structure comprises 154 residues: Xanthine-guanine phosphoribosyltransferase (154 aa).

5-phospho-alpha-D-ribose 1-diphosphate is bound by residues 38–39 (RG), K71, and 90–98 (DDLVDTGGT). K71 is a binding site for GMP. A Mg(2+)-binding site is contributed by D91. Guanine contacts are provided by D94 and I137. Residues D94 and I137 each coordinate xanthine. GMP contacts are provided by residues 94 to 98 (DTGGT) and 136 to 137 (WI).

Belongs to the purine/pyrimidine phosphoribosyltransferase family. XGPT subfamily. Homotetramer. It depends on Mg(2+) as a cofactor.

The protein resides in the cell inner membrane. The enzyme catalyses GMP + diphosphate = guanine + 5-phospho-alpha-D-ribose 1-diphosphate. It carries out the reaction XMP + diphosphate = xanthine + 5-phospho-alpha-D-ribose 1-diphosphate. The catalysed reaction is IMP + diphosphate = hypoxanthine + 5-phospho-alpha-D-ribose 1-diphosphate. The protein operates within purine metabolism; GMP biosynthesis via salvage pathway; GMP from guanine: step 1/1. Its pathway is purine metabolism; XMP biosynthesis via salvage pathway; XMP from xanthine: step 1/1. Its function is as follows. Purine salvage pathway enzyme that catalyzes the transfer of the ribosyl-5-phosphate group from 5-phospho-alpha-D-ribose 1-diphosphate (PRPP) to the N9 position of the 6-oxopurines guanine and xanthine to form the corresponding ribonucleotides GMP (guanosine 5'-monophosphate) and XMP (xanthosine 5'-monophosphate), with the release of PPi. To a lesser extent, also acts on hypoxanthine. This chain is Xanthine-guanine phosphoribosyltransferase, found in Buchnera aphidicola subsp. Schizaphis graminum (strain Sg).